Here is a 284-residue protein sequence, read N- to C-terminus: Aquaporin NIP1-1 (284 aa).

A compositionally biased stretch (polar residues) spans 1–12 (MAGGDNNSQTTN). Positions 1-28 (MAGGDNNSQTTNGGSGHEQRAMEEGRKQ) are disordered. Residues 17–28 (HEQRAMEEGRKQ) are compositionally biased toward basic and acidic residues. Helical transmembrane passes span 50–70 (IIAE…AVTI) and 78–98 (ITFP…VYAV). The NPA 1 signature appears at 107–109 (NPA). The next 3 helical transmembrane spans lie at 129–149 (AAAQ…MFGG), 166–186 (SLVL…GVAT), and 194–214 (LAGL…GPIS). Positions 219–221 (NPA) match the NPA 2 motif. The helical transmembrane segment at 236-256 (IWVYIVGPVAGAVAGAWAYNI) threads the bilayer.

Belongs to the MIP/aquaporin (TC 1.A.8) family. NIP (TC 1.A.8.12) subfamily. In terms of tissue distribution, expressed in leaves and at lower levels in roots and anthers.

The protein resides in the membrane. In terms of biological role, aquaporins facilitate the transport of water and small neutral solutes across cell membranes. The protein is Aquaporin NIP1-1 (NIP1-1) of Oryza sativa subsp. japonica (Rice).